The following is a 498-amino-acid chain: uncharacterized protein (498 aa).

This is an uncharacterized protein from Acanthamoeba polyphaga (Amoeba).